A 625-amino-acid polypeptide reads, in one-letter code: Interferon-induced GTP-binding protein MxE (625 aa).

The 274-residue stretch at 40 to 313 (DLNLPAIAVI…LVEHIAKNLP (274 aa)) folds into the Dynamin-type G domain. Positions 50 to 57 (GDQSSGKS) are G1 motif. 50–57 (GDQSSGKS) lines the GTP pocket. The tract at residues 75-77 (VTR) is G2 motif. Residues 151 to 154 (DLPG) form a G3 motif region. GTP-binding positions include 151–155 (DLPGI) and 220–223 (TKPD). Residues 220 to 223 (TKPD) form a G4 motif region. Positions 252 to 255 (KCRG) are G5 motif. Residues 536 to 625 (VREMAYHLTS…RVLSKFVHSA (90 aa)) form the GED domain.

The protein belongs to the TRAFAC class dynamin-like GTPase superfamily. Dynamin/Fzo/YdjA family.

The protein localises to the cytoplasm. In Danio rerio (Zebrafish), this protein is Interferon-induced GTP-binding protein MxE (mxe).